Consider the following 432-residue polypeptide: MSYFFGSTVPFAEPLWYSRPENFRYNESHRRLRESVRGYIEAEIMPFCTQWEADGEVPSHVLKRHAALGYAAALINPSAVKEHMHDVRLPGDVPPREWDEFHGLIVADEVARCGSLGVLWALGCGTAIACPILVNYGTEEQKAKFLPPVIHGESRFCLGITEPEVGSDIANLVTRAEQEGNYFIVNGTKKWVTNGTFADYCIAAVRTGQAGRTGISLLNIPLDVAGVSREKIESSGVASGGTASITFDNVQVPVENLLGEKNKGFYMLMSSFDHHRSWIAANCLRLARVCLEDAYQYALTRQTFGKPLINHQTIRLKLANIGIQITSSYALLESLTEMRQNLSVKMGQVHRGIGGLCAITKVAAARTFELAVRESQQIMGASAYTRTGPGLRVERLSRDMRVLVIGGGSEEILSEMSVVQEQKDLNRCKSCP.

This sequence belongs to the acyl-CoA dehydrogenase family. FAD is required as a cofactor.

The protein operates within mycotoxin biosynthesis. Its function is as follows. Acyl-CoA dehydrogenase; part of the gene clusters that mediate the biosynthesis of the host-selective toxins (HSTs) AF-toxins responsible for Alternaria black spot of strawberry disease by the strawberry pathotype. AF-toxin I and III are valine derivatives of 2,3-dyhydroxy-isovaleric acid and 2-hydroxy-isovaleric acid respectively, while AF II is an isoleucine derivative of 2-hydroxy-valeric acid. These derivatives are bound to a 9,10-epoxy-8-hydroxy-9-methyl-decatrienoic acid (EDA) moiety. On cellular level, AF-toxins affect plasma membrane of susceptible cells and cause a sudden increase in loss of K(+) after a few minutes of toxin treatment. The aldo-keto reductase AFTS1 catalyzes the conversion of 2-keto-isovaleric acid (2-KIV) to 2-hydroxy-isovaleric acid (2-HIV) by reduction of its ketone to an alcohol. The acyl-CoA ligase AFT1, the hydrolase AFT2 and the enoyl-CoA hydratases AFT3 and AFT6, but also the polyketide synthase AFT9, the acyl-CoA dehydrogenase AFT10, the cytochrome P450 monooxygenase AFT11 and the oxidoreductase AFT12 are all involved in the biosynthesis of the AK-, AF- and ACT-toxin common EDA structural moiety. The exact function of each enzyme, and of additional enzymes identified within the AF-toxin clusters have still to be determined. The chain is Acyl-CoA dehydrogenase AFT10-1 from Alternaria alternata (Alternaria rot fungus).